The primary structure comprises 529 residues: Listeriolysin O (529 aa).

A signal peptide spans Met1 to Ala24. The next 4 membrane-spanning stretches (beta stranded) occupy residues Glu214–Ala227, Val234–Lys243, Ser312–Ala321, and Ser329–Ser341. Positions Glu483 to Arg493 match the Conserved undecapeptide motif. The Cholesterol binding signature appears at Thr515–Leu516.

The protein belongs to the cholesterol-dependent cytolysin family. In terms of assembly, homooligomeric pore complex of 35 to 50 subunits; when inserted in the host membrane.

It is found in the secreted. It localises to the host membrane. The protein localises to the host cell membrane. Its activity is regulated as follows. Activity of listeriolysin O is regulated on multiple levels. It should be high in the phagosome, thereby allowing escape of the bacteria from the phagosomal compartment. Then, once inside the host cytosol, the activity must be controlled to prevent lysis of the host plasma membrane and loss of the intracellular environment. Functionally, a cholesterol-dependent toxin that causes cytolysis by forming pores in cholesterol containing host membranes. After binding to target membranes, the protein undergoes a major conformation change, leading to its insertion in the host membrane and formation of an oligomeric pore complex. Cholesterol is required for binding to host membranes, membrane insertion and pore formation; cholesterol binding is mediated by a Thr-Leu pair in the C-terminus. Acts as a major virulence factor required for the escape of bacteria from phagosomal vacuoles and entry into the host cytosol. Can be reversibly inactivated by oxidation. The polypeptide is Listeriolysin O (hly) (Listeria monocytogenes serotype 4b (strain CLIP80459)).